A 495-amino-acid chain; its full sequence is Probable biotin-dependent acyl-coenzyme A carboxylase beta3 subunit (495 aa).

The CoA carboxyltransferase N-terminal domain occupies M1–P236. Residues T242–A470 form the CoA carboxyltransferase C-terminal domain.

It belongs to the AccD/PCCB family. In terms of assembly, the biotin-dependent acyl-CoA carboxylase complex is composed of an AccA protein, which contains the biotin carboxylase (BC) and biotin carboxyl carrier protein (BCCP) domains, and an AccD protein, which contains the carboxyl transferase (CT) domain.

Functionally, component of a biotin-dependent acyl-CoA carboxylase complex. This subunit transfers the CO2 from carboxybiotin to the CoA ester substrate. This chain is Probable biotin-dependent acyl-coenzyme A carboxylase beta3 subunit (accD3), found in Mycobacterium bovis (strain ATCC BAA-935 / AF2122/97).